Reading from the N-terminus, the 278-residue chain is Indole-3-glycerol phosphate synthase (278 aa).

The protein belongs to the TrpC family.

It catalyses the reaction 1-(2-carboxyphenylamino)-1-deoxy-D-ribulose 5-phosphate + H(+) = (1S,2R)-1-C-(indol-3-yl)glycerol 3-phosphate + CO2 + H2O. The protein operates within amino-acid biosynthesis; L-tryptophan biosynthesis; L-tryptophan from chorismate: step 4/5. This is Indole-3-glycerol phosphate synthase from Pseudomonas aeruginosa (strain LESB58).